Here is a 320-residue protein sequence, read N- to C-terminus: Transcription factor bHLH96 (320 aa).

The tract at residues Glu30–Glu121 is disordered. The span at Tyr65 to Leu76 shows a compositional bias: acidic residues. Residues Gly104–Ser114 are compositionally biased toward basic residues. The region spanning Asn122–Leu173 is the bHLH domain. Residues Val184–Ser206 are disordered. Residues Ser244–Ser320 enclose the ACT domain.

In terms of assembly, homodimer. As to expression, expressed constitutively in roots, leaves, stems, and flowers.

It localises to the nucleus. This Arabidopsis thaliana (Mouse-ear cress) protein is Transcription factor bHLH96 (BHLH96).